A 441-amino-acid polypeptide reads, in one-letter code: ATP-dependent protease ATPase subunit HslU (441 aa).

Residues Ile-18, 60–65 (GVGKTE), Asp-254, Glu-319, and Arg-391 each bind ATP.

Belongs to the ClpX chaperone family. HslU subfamily. A double ring-shaped homohexamer of HslV is capped on each side by a ring-shaped HslU homohexamer. The assembly of the HslU/HslV complex is dependent on binding of ATP.

The protein localises to the cytoplasm. In terms of biological role, ATPase subunit of a proteasome-like degradation complex; this subunit has chaperone activity. The binding of ATP and its subsequent hydrolysis by HslU are essential for unfolding of protein substrates subsequently hydrolyzed by HslV. HslU recognizes the N-terminal part of its protein substrates and unfolds these before they are guided to HslV for hydrolysis. In Shewanella pealeana (strain ATCC 700345 / ANG-SQ1), this protein is ATP-dependent protease ATPase subunit HslU.